A 326-amino-acid polypeptide reads, in one-letter code: Adenine deaminase (326 aa).

The Zn(2+) site is built by His14, His16, and His194. The active-site Proton donor is the Glu197. Asp275 is a binding site for Zn(2+). A substrate-binding site is contributed by Asp276.

This sequence belongs to the metallo-dependent hydrolases superfamily. Adenosine and AMP deaminases family. Adenine deaminase type 2 subfamily. It depends on Zn(2+) as a cofactor.

It catalyses the reaction adenine + H2O + H(+) = hypoxanthine + NH4(+). Functionally, catalyzes the hydrolytic deamination of adenine to hypoxanthine. Plays an important role in the purine salvage pathway and in nitrogen catabolism. The protein is Adenine deaminase of Crocosphaera subtropica (strain ATCC 51142 / BH68) (Cyanothece sp. (strain ATCC 51142)).